The primary structure comprises 214 residues: Large ribosomal subunit protein uL4c (214 aa).

The disordered stretch occupies residues 43 to 80 (KQSNEKRQGSANTKTRSEVRGGGRKPWRQKGTGRARAG). A compositionally biased stretch (basic residues) spans 64–75 (GGRKPWRQKGTG).

This sequence belongs to the universal ribosomal protein uL4 family. In terms of assembly, part of the 50S ribosomal subunit.

It is found in the plastid. The protein localises to the chloroplast. Its function is as follows. Probably binds the 23S rRNA. The polypeptide is Large ribosomal subunit protein uL4c (rpl4) (Porphyra purpurea (Red seaweed)).